The sequence spans 303 residues: Tyrosine recombinase XerC (303 aa).

The 87-residue stretch at 3–89 folds into the Core-binding (CB) domain; the sequence is IQNDQWVSAF…TLRSFYQFLV (87 aa). Residues 110–297 enclose the Tyr recombinase domain; sequence KLPSFLYEEE…TKDRLRDVYR (188 aa). Residues Arg-150, Lys-174, His-249, Arg-252, and His-275 contribute to the active site. The O-(3'-phospho-DNA)-tyrosine intermediate role is filled by Tyr-284.

The protein belongs to the 'phage' integrase family. XerC subfamily. In terms of assembly, forms a cyclic heterotetrameric complex composed of two molecules of XerC and two molecules of XerD.

The protein resides in the cytoplasm. Its function is as follows. Site-specific tyrosine recombinase, which acts by catalyzing the cutting and rejoining of the recombining DNA molecules. The XerC-XerD complex is essential to convert dimers of the bacterial chromosome into monomers to permit their segregation at cell division. It also contributes to the segregational stability of plasmids. This is Tyrosine recombinase XerC from Halalkalibacterium halodurans (strain ATCC BAA-125 / DSM 18197 / FERM 7344 / JCM 9153 / C-125) (Bacillus halodurans).